A 168-amino-acid chain; its full sequence is Probable chemoreceptor glutamine deamidase CheD 2 (168 aa).

The protein belongs to the CheD family.

It carries out the reaction L-glutaminyl-[protein] + H2O = L-glutamyl-[protein] + NH4(+). Functionally, probably deamidates glutamine residues to glutamate on methyl-accepting chemotaxis receptors (MCPs), playing an important role in chemotaxis. The polypeptide is Probable chemoreceptor glutamine deamidase CheD 2 (Leptospira interrogans serogroup Icterohaemorrhagiae serovar copenhageni (strain Fiocruz L1-130)).